A 120-amino-acid chain; its full sequence is Large ribosomal subunit protein bL19 (120 aa).

Belongs to the bacterial ribosomal protein bL19 family.

This protein is located at the 30S-50S ribosomal subunit interface and may play a role in the structure and function of the aminoacyl-tRNA binding site. The polypeptide is Large ribosomal subunit protein bL19 (rplS) (Nostoc sp. (strain PCC 7120 / SAG 25.82 / UTEX 2576)).